Consider the following 382-residue polypeptide: Pyrimidine monooxygenase RutA (382 aa).

FMN is bound by residues 68–69 (IK), asparagine 134, glutamate 143, 159–160 (RY), and serine 209.

The protein belongs to the NtaA/SnaA/DszA monooxygenase family. RutA subfamily.

The enzyme catalyses uracil + FMNH2 + NADH + O2 = (Z)-3-ureidoacrylate + FMN + NAD(+) + H2O + H(+). It carries out the reaction thymine + FMNH2 + NADH + O2 = (Z)-2-methylureidoacrylate + FMN + NAD(+) + H2O + H(+). In terms of biological role, catalyzes the pyrimidine ring opening between N-3 and C-4 by an unusual flavin hydroperoxide-catalyzed mechanism, adding oxygen atoms in the process to yield ureidoacrylate peracid, that immediately reacts with FMN forming ureidoacrylate and FMN-N(5)-oxide. The FMN-N(5)-oxide reacts spontaneously with NADH to produce FMN. Requires the flavin reductase RutF to regenerate FMN in vivo. The polypeptide is Pyrimidine monooxygenase RutA (Escherichia coli (strain SE11)).